The primary structure comprises 124 residues: Aspartate 1-decarboxylase (124 aa).

Residue Ser-25 is the Schiff-base intermediate with substrate; via pyruvic acid of the active site. The residue at position 25 (Ser-25) is a Pyruvic acid (Ser). Thr-57 lines the substrate pocket. The active-site Proton donor is Tyr-58. 71–73 (GAA) lines the substrate pocket.

This sequence belongs to the PanD family. Heterooctamer of four alpha and four beta subunits. It depends on pyruvate as a cofactor. Post-translationally, is synthesized initially as an inactive proenzyme, which is activated by self-cleavage at a specific serine bond to produce a beta-subunit with a hydroxyl group at its C-terminus and an alpha-subunit with a pyruvoyl group at its N-terminus.

The protein resides in the cytoplasm. It catalyses the reaction L-aspartate + H(+) = beta-alanine + CO2. Its pathway is cofactor biosynthesis; (R)-pantothenate biosynthesis; beta-alanine from L-aspartate: step 1/1. Catalyzes the pyruvoyl-dependent decarboxylation of aspartate to produce beta-alanine. This is Aspartate 1-decarboxylase from Bdellovibrio bacteriovorus (strain ATCC 15356 / DSM 50701 / NCIMB 9529 / HD100).